The following is a 489-amino-acid chain: 5-hydroxytryptamine receptor 3A (489 aa).

A signal peptide spans 1 to 23 (MRLCIPQVLLALFLSMLTAPGEG). The Extracellular portion of the chain corresponds to 24–246 (SRRRATQARD…MKFYVIIRRR (223 aa)). N-linked (GlcNAc...) asparagine glycans are attached at residues N109, N175, and N191. Residues C162 and C176 are joined by a disulfide bond. The helical transmembrane segment at 247–273 (PLFYAVSLLLPSIFLMVVDIVGFCLPP) threads the bilayer. The Cytoplasmic portion of the chain corresponds to 274–278 (DSGER). A helical transmembrane segment spans residues 279 to 297 (VSFKITLLLGYSVFLIIVS). At 298 to 307 (DTLPATAIGT) the chain is on the extracellular side. A helical transmembrane segment spans residues 308–326 (PLIGVYFVVCMALLVISLA). Topologically, residues 327–466 (ETIFIVRLVH…GYVLDRLLFR (140 aa)) are cytoplasmic. The segment at 425 to 461 (AVRGLLQELSSIRHFLEKRDEMREVARDWLRVGYVLD) is HA-stretch; determines single-channel conductance in 5-HT3 receptors. Residues 467–486 (IYLLAVLAYSITLVTLWSIW) traverse the membrane as a helical segment. Residues 487–489 (HYS) are Extracellular-facing.

This sequence belongs to the ligand-gated ion channel (TC 1.A.9) family. 5-hydroxytryptamine receptor (TC 1.A.9.2) subfamily. HTR3A sub-subfamily. Forms homopentameric as well as heteropentameric serotonin-activated cation-selective channel complexes with HTR3B or HTR3C or HTR3D or HTR3E. The homomeric complex is functional but exhibits low conductance with modified voltage dependence, and decreased agonist and antagonist affinity. Heteropentameric complexes display properties which resemble that of neuronal serotonin-activated channels in vivo. Interacts with RIC3. Brain, spinal cord, and heart.

It localises to the postsynaptic cell membrane. The protein resides in the cell membrane. It carries out the reaction Na(+)(in) = Na(+)(out). The catalysed reaction is K(+)(in) = K(+)(out). The enzyme catalyses Ca(2+)(in) = Ca(2+)(out). It catalyses the reaction Mg(2+)(in) = Mg(2+)(out). Functionally, forms serotonin (5-hydroxytryptamine/5-HT3)-activated cation-selective channel complexes, which when activated cause fast, depolarizing responses in neurons. The protein is 5-hydroxytryptamine receptor 3A of Mus musculus (Mouse).